Here is a 79-residue protein sequence, read N- to C-terminus: UPF0291 protein lp_2062 (79 aa).

It belongs to the UPF0291 family.

Its subcellular location is the cytoplasm. In Lactiplantibacillus plantarum (strain ATCC BAA-793 / NCIMB 8826 / WCFS1) (Lactobacillus plantarum), this protein is UPF0291 protein lp_2062.